The primary structure comprises 331 residues: ADP-L-glycero-D-manno-heptose-6-epimerase (331 aa).

Residues 11-12 (FI), 32-33 (DN), lysine 39, lysine 54, 75-79 (EGACS), and asparagine 92 each bind NADP(+). Tyrosine 139 (proton acceptor) is an active-site residue. Position 143 (lysine 143) interacts with NADP(+). Residue asparagine 168 coordinates substrate. Residues valine 169 and lysine 177 each contribute to the NADP(+) site. Lysine 177 functions as the Proton acceptor in the catalytic mechanism. Residues arginine 179, histidine 186, 200 to 203 (FGEY), arginine 213, and tyrosine 292 contribute to the substrate site.

This sequence belongs to the NAD(P)-dependent epimerase/dehydratase family. HldD subfamily. As to quaternary structure, homopentamer. The cofactor is NADP(+).

It catalyses the reaction ADP-D-glycero-beta-D-manno-heptose = ADP-L-glycero-beta-D-manno-heptose. It participates in nucleotide-sugar biosynthesis; ADP-L-glycero-beta-D-manno-heptose biosynthesis; ADP-L-glycero-beta-D-manno-heptose from D-glycero-beta-D-manno-heptose 7-phosphate: step 4/4. Catalyzes the interconversion between ADP-D-glycero-beta-D-manno-heptose and ADP-L-glycero-beta-D-manno-heptose via an epimerization at carbon 6 of the heptose. The sequence is that of ADP-L-glycero-D-manno-heptose-6-epimerase from Cupriavidus necator (strain ATCC 17699 / DSM 428 / KCTC 22496 / NCIMB 10442 / H16 / Stanier 337) (Ralstonia eutropha).